Here is a 167-residue protein sequence, read N- to C-terminus: Alpha-crystallin A chain (167 aa).

Met-1 carries the post-translational modification N-acetylmethionine. The 112-residue stretch at 47–158 (YYRQSFFRGF…GERPIPVSRE (112 aa)) folds into the sHSP domain. Residues His-94, Glu-96, His-101, and His-148 each contribute to the Zn(2+) site. The segment at 143–167 (SLDSSHGERPIPVSREEKPTSAPSS) is disordered. Positions 147-161 (SHGERPIPVSREEKP) are enriched in basic and acidic residues. Ser-156 is a glycosylation site (O-linked (GlcNAc) serine).

It belongs to the small heat shock protein (HSP20) family. In terms of assembly, heteropolymer composed of three CRYAA and one CRYAB subunits. Inter-subunit bridging via zinc ions enhances stability, which is crucial as there is no protein turn over in the lens. Can also form homodimers and homotetramers (dimers of dimers) which serve as the building blocks of homooligomers. Within homooligomers, the zinc-binding motif is created from residues of 3 different molecules. His-94 and Glu-96 from one molecule are ligands of the zinc ion, and His-101 and His-148 residues from additional molecules complete the site with tetrahedral coordination geometry.

It is found in the cytoplasm. Its subcellular location is the nucleus. Functionally, contributes to the transparency and refractive index of the lens. May act as a chaperone, preventing aggregation of various proteins under a wide range of stress conditions. This chain is Alpha-crystallin A chain (CRYAA), found in Pelophylax lessonae (Pool frog).